Here is a 510-residue protein sequence, read N- to C-terminus: uncharacterized protein (510 aa).

Disordered stretches follow at residues 1 to 154 (MGSP…ATFL), 208 to 227 (DGNHGNQAKNSGPAETGDLA), 234 to 276 (TRES…QGIL), and 368 to 480 (NFYT…GCPR). S43 bears the Phosphoserine mark. Over residues 50 to 60 (PLVSQQDTSEA) the composition is skewed to polar residues. Residues 78 to 92 (EEERLGSPEDEKMDG) show a composition bias toward basic and acidic residues. Position 84 is a phosphoserine (S84). Composition is skewed to polar residues over residues 97–109 (SQPSVETEQQVAN) and 118–135 (QPSSESFCAETETGSNRR). S120 bears the Phosphoserine mark. The span at 139–151 (ASGSEEAKAASAA) shows a compositional bias: low complexity. Residues 243–255 (SSLLTTTRGLTSG) show a composition bias toward low complexity. Basic and acidic residues predominate over residues 379-395 (RTKELQLVAKEDTDSTR). The span at 414–441 (SVHQEFSSGDINTRSLQDPGNSQSSGLS) shows a compositional bias: polar residues.

This is an uncharacterized protein from Rattus norvegicus (Rat).